The following is a 318-amino-acid chain: Trans-prenyltransferase (318 aa).

Residues 1–21 (MLHLIYISIIVVLIIILISYT) form a helical membrane-spanning segment. Residues Lys-85, Arg-88, and His-122 each coordinate isopentenyl diphosphate. 2 residues coordinate Mg(2+): Asp-129 and Asp-135. Residue Arg-140 coordinates dimethylallyl diphosphate. Position 141 (Arg-141) interacts with isopentenyl diphosphate. Dimethylallyl diphosphate contacts are provided by Lys-216, Thr-217, and Gln-254.

This sequence belongs to the FPP/GGPP synthase family. Asfivirus trans-prenyltransferase subfamily. Requires Mg(2+) as cofactor.

It is found in the host endoplasmic reticulum. The protein resides in the host membrane. The catalysed reaction is isopentenyl diphosphate + dimethylallyl diphosphate = (2E)-geranyl diphosphate + diphosphate. It catalyses the reaction isopentenyl diphosphate + (2E)-geranyl diphosphate = (2E,6E)-farnesyl diphosphate + diphosphate. The enzyme catalyses isopentenyl diphosphate + (2E,6E)-farnesyl diphosphate = (2E,6E,10E)-geranylgeranyl diphosphate + diphosphate. It carries out the reaction isopentenyl diphosphate + (2E,6E,10E)-geranylgeranyl diphosphate = (2E,6E,10E,14E)-geranylfarnesyl diphosphate + diphosphate. It functions in the pathway isoprenoid biosynthesis; farnesyl diphosphate biosynthesis; farnesyl diphosphate from geranyl diphosphate and isopentenyl diphosphate: step 1/1. Its pathway is isoprenoid biosynthesis; geranyl diphosphate biosynthesis; geranyl diphosphate from dimethylallyl diphosphate and isopentenyl diphosphate: step 1/1. It participates in isoprenoid biosynthesis; geranylgeranyl diphosphate biosynthesis; geranylgeranyl diphosphate from farnesyl diphosphate and isopentenyl diphosphate: step 1/1. In terms of biological role, trans-prenyltransferase that catalyzes the sequential condensation of isopentenyl diphosphate (IPP) with different allylic diphosphates, such as dimethylallyl diphosphate (DMAPP), geranyl diphosphate (GPP), farnesyl diphosphate (FPP) and geranylgeranyl diphosphate (GGPP), farnesyl diphosphate being the best allylic substrate. The polypeptide is Trans-prenyltransferase (African swine fever virus (strain Badajoz 1971 Vero-adapted) (Ba71V)).